Consider the following 332-residue polypeptide: Methionyl-tRNA formyltransferase (332 aa).

Position 114–117 (114–117 (SLLP)) interacts with (6S)-5,6,7,8-tetrahydrofolate.

This sequence belongs to the Fmt family.

It catalyses the reaction L-methionyl-tRNA(fMet) + (6R)-10-formyltetrahydrofolate = N-formyl-L-methionyl-tRNA(fMet) + (6S)-5,6,7,8-tetrahydrofolate + H(+). Functionally, attaches a formyl group to the free amino group of methionyl-tRNA(fMet). The formyl group appears to play a dual role in the initiator identity of N-formylmethionyl-tRNA by promoting its recognition by IF2 and preventing the misappropriation of this tRNA by the elongation apparatus. The chain is Methionyl-tRNA formyltransferase from Corynebacterium aurimucosum (strain ATCC 700975 / DSM 44827 / CIP 107346 / CN-1) (Corynebacterium nigricans).